Reading from the N-terminus, the 506-residue chain is Aminoaldehyde dehydrogenase 2 (506 aa).

A Na(+)-binding site is contributed by D101. Residues 161–163 (TPW) and 187–190 (KPSE) contribute to the NAD(+) site. Residue L191 coordinates Na(+). NAD(+) contacts are provided by residues 241–244 (STET) and E262. The active-site Proton acceptor is the E262. The Nucleophile role is filled by C297. Residues E396 and W462 each contribute to the NAD(+) site.

This sequence belongs to the aldehyde dehydrogenase family.

The enzyme catalyses 4-aminobutanal + NAD(+) + H2O = 4-aminobutanoate + NADH + 2 H(+). It catalyses the reaction 3-aminopropanal + NAD(+) + H2O = beta-alanine + NADH + 2 H(+). It carries out the reaction 4-(trimethylamino)butanal + NAD(+) + H2O = 4-(trimethylamino)butanoate + NADH + 2 H(+). The catalysed reaction is 4-guanidinobutanal + NAD(+) + H2O = 4-guanidinobutanoate + NADH + 2 H(+). It participates in amine and polyamine biosynthesis; betaine biosynthesis via choline pathway; betaine from betaine aldehyde: step 1/1. Functionally, dehydrogenase that catalyzes the oxidation of several aminoaldehydes. Metabolizes and detoxifies aldehyde products of polyamine degradation to non-toxic amino acids. Catalyzes the oxidation of 4-aminobutanal and 3-aminopropanal to 4-aminobutanoate and beta-alanine, respectively. Catalyzes the oxidation of 4-(trimethylamino)butanal and 4-guanidinobutanal to 4-trimethylammoniobutanoate and 4-guanidinobutanoate, respectively. The sequence is that of Aminoaldehyde dehydrogenase 2 from Zea mays (Maize).